The primary structure comprises 166 residues: MALYEHVFLARQDASPQQVEELTAQMTGIVEGLGGKVTKTENWGVRSLTYRMNKNRKAHFVLLNIDAPSAAIAEIERQERISEDVIRYLSVRVEELEEGPSAMMRKADRDRERDDRGGGFRGEREGGFRGDREGGFRGGDRDGGGFRGDRGPRRPREEAETATDGE.

A disordered region spans residues 97-166 (EEGPSAMMRK…EEAETATDGE (70 aa)). Residues 105-159 (RKADRDRERDDRGGGFRGEREGGFRGDREGGFRGGDRDGGGFRGDRGPRRPREEA) are compositionally biased toward basic and acidic residues.

Belongs to the bacterial ribosomal protein bS6 family.

Binds together with bS18 to 16S ribosomal RNA. The protein is Small ribosomal subunit protein bS6 of Bradyrhizobium diazoefficiens (strain JCM 10833 / BCRC 13528 / IAM 13628 / NBRC 14792 / USDA 110).